The following is a 508-amino-acid chain: Probable cytosol aminopeptidase (508 aa).

Mn(2+) is bound by residues Lys-276 and Asp-281. Lys-288 is a catalytic residue. The Mn(2+) site is built by Asp-299, Asp-358, and Glu-360. The active site involves Arg-362.

This sequence belongs to the peptidase M17 family. It depends on Mn(2+) as a cofactor.

It is found in the cytoplasm. It carries out the reaction Release of an N-terminal amino acid, Xaa-|-Yaa-, in which Xaa is preferably Leu, but may be other amino acids including Pro although not Arg or Lys, and Yaa may be Pro. Amino acid amides and methyl esters are also readily hydrolyzed, but rates on arylamides are exceedingly low.. The catalysed reaction is Release of an N-terminal amino acid, preferentially leucine, but not glutamic or aspartic acids.. In terms of biological role, presumably involved in the processing and regular turnover of intracellular proteins. Catalyzes the removal of unsubstituted N-terminal amino acids from various peptides. The sequence is that of Probable cytosol aminopeptidase from Chlorobium luteolum (strain DSM 273 / BCRC 81028 / 2530) (Pelodictyon luteolum).